The following is a 440-amino-acid chain: Proline--tRNA ligase (440 aa).

The protein belongs to the class-II aminoacyl-tRNA synthetase family. ProS type 2 subfamily. As to quaternary structure, homodimer.

It localises to the cytoplasm. The catalysed reaction is tRNA(Pro) + L-proline + ATP = L-prolyl-tRNA(Pro) + AMP + diphosphate. Functionally, catalyzes the attachment of proline to tRNA(Pro) in a two-step reaction: proline is first activated by ATP to form Pro-AMP and then transferred to the acceptor end of tRNA(Pro). The polypeptide is Proline--tRNA ligase (Agrobacterium fabrum (strain C58 / ATCC 33970) (Agrobacterium tumefaciens (strain C58))).